The sequence spans 583 residues: MTSIAEGLFKSLPKPKYTGEEEELPQHGQRGPRIVGPGQLDDTQIVLRRTGPPPYGNRAGWRPRAPEDFGDGGAFPEILVAQYPLDMGRKGTQSKSNALAVQVDAEGKVKYDAIARRGHSDDRIVHASFKDLIPLRQRVDMGEVSLDRPSEEEVQAQMEKTKNALASLVSGAVAAQKPKNVKGGSRAEPTFVRYTPANQMGDTSRKNDRIMKIVERQQDPMEPPKFKHKKIPRGPPSPPPPIMHSPPRKLTAEDQEAWKIPPPVSNWKNPKGYTVPLDKRLAADGRGLQDVSINDKFAQFAEALFTADRHAREEVRLRAQMQQRLAEKEKAQKEEHLRALAQKAREERSRAQSRASHSPSRGRSRSRSYSDASSRSRTPSEDEEAARERERIRRERRQDAERQLRQSRMGTERRIQAMAREQNRDISEKVALGLAKPTQSSETMWDSRLFNQTSGLSTGFNEDNPYDKPLFAAQDAINSIYRPKPQADFDDEADAEGEMSKIQKSNRFEVLGRAKEGFRGAADAEERSGPVQFEKDTADPFGIDSMIADVTGGAGGAGQKRYGIQEAEPDSRGSKRARVDEEN.

4 disordered regions span residues methionine 1–aspartate 68, lysine 177–glutamate 253, methionine 321–arginine 424, and arginine 519–asparagine 583. Positions threonine 203 to lysine 225 are enriched in basic and acidic residues. A compositionally biased stretch (pro residues) spans arginine 233 to histidine 244. Residues leucine 325–arginine 350 are compositionally biased toward basic and acidic residues. Over residues arginine 367–arginine 377 the composition is skewed to low complexity. Basic and acidic residues-rich tracts occupy residues alanine 386–arginine 424, arginine 519–alanine 538, and proline 569–asparagine 583.

This sequence belongs to the SNW family. As to quaternary structure, associated with the spliceosome.

It localises to the nucleus. Functionally, involved in pre-mRNA splicing. This chain is Pre-mRNA-processing protein 45 (prp45), found in Emericella nidulans (strain FGSC A4 / ATCC 38163 / CBS 112.46 / NRRL 194 / M139) (Aspergillus nidulans).